The sequence spans 141 residues: Large ribosomal subunit protein uL11 (141 aa).

Belongs to the universal ribosomal protein uL11 family. In terms of assembly, part of the ribosomal stalk of the 50S ribosomal subunit. Interacts with L10 and the large rRNA to form the base of the stalk. L10 forms an elongated spine to which L12 dimers bind in a sequential fashion forming a multimeric L10(L12)X complex. Post-translationally, one or more lysine residues are methylated.

In terms of biological role, forms part of the ribosomal stalk which helps the ribosome interact with GTP-bound translation factors. The polypeptide is Large ribosomal subunit protein uL11 (Streptococcus pneumoniae serotype 2 (strain D39 / NCTC 7466)).